The following is a 650-amino-acid chain: Sterol O-acyltransferase 2 (650 aa).

Positions 41–79 (LTSSNNSCASEHEGEGEGEDERPATTSSAPTQNHSAGDV) are disordered. Residues 64 to 75 (ATTSSAPTQNHS) are compositionally biased toward polar residues. 5 helical membrane passes run 223–243 (FSGL…KALI), 300–320 (TGWA…MYLT), 412–432 (INVS…QIEY), 450–470 (IFGT…PVAM), and 493–513 (LLVD…YLIW). The short motif at 531 to 537 (FYGDWWN) is the FYXDWWN motif element. 2 helical membrane passes run 575–595 (ATLM…YVIF) and 630–650 (VIFW…YLTF). The active site involves His587.

This sequence belongs to the membrane-bound acyltransferase family. Sterol o-acyltransferase subfamily.

It is found in the endoplasmic reticulum membrane. In terms of biological role, sterol O-acyltransferase that catalyzes the formation of stery esters. In Saccharomyces uvarum (strain ATCC 76518 / CBS 7001 / CLIB 283 / NBRC 10550 / MCYC 623 / NCYC 2669 / NRRL Y-11845) (Yeast), this protein is Sterol O-acyltransferase 2 (ARE2).